Here is a 345-residue protein sequence, read N- to C-terminus: Uroporphyrinogen decarboxylase (345 aa).

Substrate contacts are provided by residues 27–31 (RQAGR), F46, D76, Y152, S207, and H321.

This sequence belongs to the uroporphyrinogen decarboxylase family. In terms of assembly, homodimer.

It localises to the cytoplasm. It carries out the reaction uroporphyrinogen III + 4 H(+) = coproporphyrinogen III + 4 CO2. The protein operates within porphyrin-containing compound metabolism; protoporphyrin-IX biosynthesis; coproporphyrinogen-III from 5-aminolevulinate: step 4/4. Functionally, catalyzes the decarboxylation of four acetate groups of uroporphyrinogen-III to yield coproporphyrinogen-III. The polypeptide is Uroporphyrinogen decarboxylase (Staphylococcus aureus (strain Mu3 / ATCC 700698)).